The chain runs to 337 residues: Glyceraldehyde-3-phosphate dehydrogenase 1 (337 aa).

NAD(+) contacts are provided by residues 12 to 13 (RI), Asp34, and Arg79. D-glyceraldehyde 3-phosphate-binding positions include 150-152 (SCT), Thr181, 210-211 (TG), and Arg233. Cys151 functions as the Nucleophile in the catalytic mechanism. Asn315 contacts NAD(+).

Belongs to the glyceraldehyde-3-phosphate dehydrogenase family. Homotetramer.

It is found in the cytoplasm. The catalysed reaction is D-glyceraldehyde 3-phosphate + phosphate + NAD(+) = (2R)-3-phospho-glyceroyl phosphate + NADH + H(+). Its pathway is carbohydrate degradation; glycolysis; pyruvate from D-glyceraldehyde 3-phosphate: step 1/5. In Mucor circinelloides f. lusitanicus (Mucor racemosus var. lusitanicus), this protein is Glyceraldehyde-3-phosphate dehydrogenase 1 (GPD1).